The following is a 123-amino-acid chain: Large ribosomal subunit protein uL14 (123 aa).

The protein belongs to the universal ribosomal protein uL14 family. As to quaternary structure, part of the 50S ribosomal subunit. Forms a cluster with proteins L3 and L19. In the 70S ribosome, L14 and L19 interact and together make contacts with the 16S rRNA in bridges B5 and B8.

Binds to 23S rRNA. Forms part of two intersubunit bridges in the 70S ribosome. The polypeptide is Large ribosomal subunit protein uL14 (Aliivibrio fischeri (strain ATCC 700601 / ES114) (Vibrio fischeri)).